Consider the following 963-residue polypeptide: Aminopeptidase N (963 aa).

At alanine 2–serine 8 the chain is on the cytoplasmic side. Residues lysine 9–valine 32 traverse the membrane as a helical; Signal-anchor for type II membrane protein segment. Positions tyrosine 33 to serine 64 are cytosolic Ser/Thr-rich junction. At tyrosine 33–serine 963 the chain is on the extracellular side. Residues lysine 65–serine 963 are metalloprotease. N-linked (GlcNAc...) asparagine glycosylation is found at asparagine 82 and asparagine 124. A Sulfotyrosine modification is found at tyrosine 171. N-linked (GlcNAc...) asparagine glycans are attached at residues asparagine 229, asparagine 237, asparagine 258, asparagine 286, asparagine 314, and asparagine 328. Glycine 347–asparagine 351 serves as a coordination point for substrate. Position 383 (histidine 383) interacts with Zn(2+). The active-site Proton acceptor is glutamate 384. Histidine 387 and glutamate 406 together coordinate Zn(2+). N-linked (GlcNAc...) asparagine glycans are attached at residues asparagine 506, asparagine 556, asparagine 569, asparagine 622, asparagine 646, and asparagine 736. Residues lysine 717–leucine 813 are interaction with TGEV spike glycoprotein. 2 disulfide bridges follow: cysteine 758/cysteine 765 and cysteine 795/cysteine 831.

This sequence belongs to the peptidase M1 family. As to quaternary structure, homodimer. Interacts with SLC6A19. In terms of assembly, (Microbial infection) Interacts with TGEV and PRCoV spike glycoprotein. Requires Zn(2+) as cofactor. In terms of processing, sulfated. N- and O-glycosylated. Post-translationally, may undergo proteolysis and give rise to a soluble form.

The protein localises to the cell membrane. The enzyme catalyses Release of an N-terminal amino acid, Xaa-|-Yaa- from a peptide, amide or arylamide. Xaa is preferably Ala, but may be most amino acids including Pro (slow action). When a terminal hydrophobic residue is followed by a prolyl residue, the two may be released as an intact Xaa-Pro dipeptide.. Its function is as follows. Broad specificity aminopeptidase which plays a role in the final digestion of peptides generated from hydrolysis of proteins by gastric and pancreatic proteases. Also involved in the processing of various peptides including peptide hormones, such as angiotensin III and IV, neuropeptides, and chemokines. May also be involved the cleavage of peptides bound to major histocompatibility complex class II molecules of antigen presenting cells. May have a role in angiogenesis and promote cholesterol crystallization. It is able to degrade Leu-enkephalin and Met-enkephalin but not cholecystokinin CCK8, neuromedin C (GRP-10), somatostatin-14, substance P and vasoactive intestinal peptide. May have a role in amino acid transport by acting as binding partner of amino acid transporter SLC6A19 and regulating its activity. (Microbial infection) In case of porcine transmissible gastroenteritis coronavirus (TGEV) and porcine respiratory coronavirus (PRCoV) infections, serves as a receptor for TGEV and PRCoV spike glycoprotein in a species-specific manner. The polypeptide is Aminopeptidase N (ANPEP) (Sus scrofa (Pig)).